The chain runs to 137 residues: Profilin-3 (137 aa).

It belongs to the profilin family. As to quaternary structure, interacts with ACTRT3. In terms of tissue distribution, testis specific.

The protein resides in the cytoplasm. It localises to the cytoskeleton. The protein localises to the nucleus. Its function is as follows. Binds to actin and affects the structure of the cytoskeleton. Slightly reduces actin polymerization. Binds to poly-L-proline, phosphatidylinositol 3-phosphate (PtdIns(3)P), phosphatidylinositol 4,5-bisphosphate (PtdIns(4,5)P2) and phosphatidylinositol 4-phosphate (PtdIns(4)P). May be involved in spermatogenesis. The chain is Profilin-3 (PFN3) from Homo sapiens (Human).